A 66-amino-acid chain; its full sequence is UPF0337 protein SpyM3_0896 (66 aa).

The protein belongs to the UPF0337 (CsbD) family.

The polypeptide is UPF0337 protein SpyM3_0896 (Streptococcus pyogenes serotype M3 (strain ATCC BAA-595 / MGAS315)).